We begin with the raw amino-acid sequence, 865 residues long: Protein translocase subunit SecA (865 aa).

ATP-binding positions include glutamine 93, 111–115, and aspartate 501; that span reads GEGKT. Cysteine 841, cysteine 843, cysteine 852, and cysteine 853 together coordinate Zn(2+).

Belongs to the SecA family. Monomer and homodimer. Part of the essential Sec protein translocation apparatus which comprises SecA, SecYEG and auxiliary proteins SecDF-YajC and YidC. Zn(2+) serves as cofactor.

The protein resides in the cell inner membrane. The protein localises to the cytoplasm. It carries out the reaction ATP + H2O + cellular proteinSide 1 = ADP + phosphate + cellular proteinSide 2.. Functionally, part of the Sec protein translocase complex. Interacts with the SecYEG preprotein conducting channel. Has a central role in coupling the hydrolysis of ATP to the transfer of proteins into and across the cell membrane, serving as an ATP-driven molecular motor driving the stepwise translocation of polypeptide chains across the membrane. This Helicobacter pylori (strain HPAG1) protein is Protein translocase subunit SecA.